A 128-amino-acid polypeptide reads, in one-letter code: Sulfurtransferase TusD (128 aa).

The active-site Cysteine persulfide intermediate is Cys78.

It belongs to the DsrE/TusD family. Heterohexamer, formed by a dimer of trimers. The hexameric TusBCD complex contains 2 copies each of TusB, TusC and TusD. The TusBCD complex interacts with TusE.

Its subcellular location is the cytoplasm. In terms of biological role, part of a sulfur-relay system required for 2-thiolation of 5-methylaminomethyl-2-thiouridine (mnm(5)s(2)U) at tRNA wobble positions. Accepts sulfur from TusA and transfers it in turn to TusE. This chain is Sulfurtransferase TusD, found in Escherichia coli O127:H6 (strain E2348/69 / EPEC).